A 78-amino-acid polypeptide reads, in one-letter code: MEFRDQVLDLLTEVAETNVIKENPDVELFEEGIIDSFQTVGLLLEIQNKLDIEVSIMDFDRDEWATPNKIVAVLEELR.

Residues 1–78 (MEFRDQVLDL…KIVAVLEELR (78 aa)) form the Carrier domain. At Ser36 the chain carries O-(pantetheine 4'-phosphoryl)serine.

This sequence belongs to the DltC family. 4'-phosphopantetheine is transferred from CoA to a specific serine of apo-DCP.

It is found in the cytoplasm. It participates in cell wall biogenesis; lipoteichoic acid biosynthesis. Its function is as follows. Carrier protein involved in the D-alanylation of lipoteichoic acid (LTA). The loading of thioester-linked D-alanine onto DltC is catalyzed by D-alanine--D-alanyl carrier protein ligase DltA. The DltC-carried D-alanyl group is further transferred to cell membrane phosphatidylglycerol (PG) by forming an ester bond, probably catalyzed by DltD. D-alanylation of LTA plays an important role in modulating the properties of the cell wall in Gram-positive bacteria, influencing the net charge of the cell wall. This chain is D-alanyl carrier protein, found in Staphylococcus saprophyticus subsp. saprophyticus (strain ATCC 15305 / DSM 20229 / NCIMB 8711 / NCTC 7292 / S-41).